The chain runs to 248 residues: Putative amino-acid ABC transporter-binding protein PatH (248 aa).

The N-terminal stretch at 1–21 (MKNWIKVAVAAIALSAATVQA) is a signal peptide.

The protein belongs to the bacterial solute-binding protein 3 family.

Its subcellular location is the periplasm. Probably part of a binding-protein-dependent transport system for an amino acid. This is Putative amino-acid ABC transporter-binding protein PatH (patH) from Vibrio harveyi (Beneckea harveyi).